Here is a 390-residue protein sequence, read N- to C-terminus: MGIHQLMQFLKEKAPNCFRTLMLDYFAGRTIGCDASMAMYQFLIQTQSAGQTQIIELTDKDGNRTGHLVGLFNRTLQFLENGIKPVWVFDGKPPLLKSGELARRKKLKEEAQVKTELALEQGDMQQALLQHQRTTTISSVMKEDAIKMLKLMGCPVIIAPCEAEAQCAELCRAGKIYATATEDMDALTFRTPVLLRGFNTKKEPIYEIIYDDMMKELEITYEQFVDLCILCGCDYTEKIEGIGPGTAYKLIKEFKSIEGILEHVQKVNAEREKNKQNPKYTVPTKFLYQDSRELFITPLVQKGEEIQLTWNKPDVENLKKFLVEEKGFAESRIDNGLKRIAKKDTTGFQSRLENFFGKTTKIIHPNNSKAKGKANKKNEQTQKSGGKKKI.

The N-domain stretch occupies residues M1–K108. D34 provides a ligand contact to Mg(2+). Residue R74 coordinates DNA. 5 residues coordinate Mg(2+): D90, E162, E164, D183, and D185. An I-domain region spans residues Q126–F254. Position 162 (E162) interacts with DNA. DNA is bound by residues G232 and D234. D234 contacts Mg(2+). Residues F348–F356 form an interaction with PCNA region. Residues T359–I390 form a disordered region.

It belongs to the XPG/RAD2 endonuclease family. FEN1 subfamily. In terms of assembly, interacts with PCNA. Three molecules of FEN1 bind to one PCNA trimer with each molecule binding to one PCNA monomer. PCNA stimulates the nuclease activity without altering cleavage specificity. Mg(2+) is required as a cofactor. Phosphorylated. Phosphorylation upon DNA damage induces relocalization to the nuclear plasma.

It is found in the nucleus. Its subcellular location is the nucleolus. The protein resides in the nucleoplasm. The protein localises to the mitochondrion. In terms of biological role, structure-specific nuclease with 5'-flap endonuclease and 5'-3' exonuclease activities involved in DNA replication and repair. During DNA replication, cleaves the 5'-overhanging flap structure that is generated by displacement synthesis when DNA polymerase encounters the 5'-end of a downstream Okazaki fragment. It enters the flap from the 5'-end and then tracks to cleave the flap base, leaving a nick for ligation. Also involved in the long patch base excision repair (LP-BER) pathway, by cleaving within the apurinic/apyrimidinic (AP) site-terminated flap. Acts as a genome stabilization factor that prevents flaps from equilibrating into structures that lead to duplications and deletions. Also possesses 5'-3' exonuclease activity on nicked or gapped double-stranded DNA, and exhibits RNase H activity. Also involved in replication and repair of rDNA and in repairing mitochondrial DNA. This Paramecium tetraurelia protein is Flap endonuclease 1-1.